Here is a 251-residue protein sequence, read N- to C-terminus: tRNA pseudouridine synthase A (251 aa).

The Nucleophile role is filled by D54. Y111 serves as a coordination point for substrate.

Belongs to the tRNA pseudouridine synthase TruA family. As to quaternary structure, homodimer.

The enzyme catalyses uridine(38/39/40) in tRNA = pseudouridine(38/39/40) in tRNA. Its function is as follows. Formation of pseudouridine at positions 38, 39 and 40 in the anticodon stem and loop of transfer RNAs. In Mycoplasma mycoides subsp. mycoides SC (strain CCUG 32753 / NCTC 10114 / PG1), this protein is tRNA pseudouridine synthase A.